A 175-amino-acid chain; its full sequence is Large ribosomal subunit protein mL67 (175 aa).

It belongs to the mitochondrion-specific ribosomal protein mL67 family. As to quaternary structure, component of the mitochondrial large ribosomal subunit (mt-LSU). Mature yeast 74S mitochondrial ribosomes consist of a small (37S) and a large (54S) subunit. The 37S small subunit contains a 15S ribosomal RNA (15S mt-rRNA) and at least 32 different proteins. The 54S large subunit contains a 21S rRNA (21S mt-rRNA) and at least 45 different proteins.

It localises to the mitochondrion. Its function is as follows. Component of the mitochondrial ribosome (mitoribosome), a dedicated translation machinery responsible for the synthesis of mitochondrial genome-encoded proteins, including at least some of the essential transmembrane subunits of the mitochondrial respiratory chain. The mitoribosomes are attached to the mitochondrial inner membrane and translation products are cotranslationally integrated into the membrane. mL67/mhr1 also has extraribosomal functions, being involved in regulation of mitochondrial DNA recombination, maintenance and repair, and generation of homoplasmic cells. mL67/mhr1 also acts as transcription factor involved in regulation of RNA polymerase II-dependent transcription. The protein is Large ribosomal subunit protein mL67 (mhr1) of Schizosaccharomyces pombe (strain 972 / ATCC 24843) (Fission yeast).